A 205-amino-acid chain; its full sequence is Urease accessory protein UreG (205 aa).

14–21 (GPVGSGKT) contacts GTP.

The protein belongs to the SIMIBI class G3E GTPase family. UreG subfamily. In terms of assembly, homodimer. UreD, UreF and UreG form a complex that acts as a GTP-hydrolysis-dependent molecular chaperone, activating the urease apoprotein by helping to assemble the nickel containing metallocenter of UreC. The UreE protein probably delivers the nickel.

The protein localises to the cytoplasm. Facilitates the functional incorporation of the urease nickel metallocenter. This process requires GTP hydrolysis, probably effectuated by UreG. This Citrobacter koseri (strain ATCC BAA-895 / CDC 4225-83 / SGSC4696) protein is Urease accessory protein UreG.